The primary structure comprises 535 residues: Glutamate--cysteine ligase (535 aa).

It belongs to the glutamate--cysteine ligase type 1 family. Type 1 subfamily.

The catalysed reaction is L-cysteine + L-glutamate + ATP = gamma-L-glutamyl-L-cysteine + ADP + phosphate + H(+). Its pathway is sulfur metabolism; glutathione biosynthesis; glutathione from L-cysteine and L-glutamate: step 1/2. In Pseudomonas savastanoi pv. phaseolicola (strain 1448A / Race 6) (Pseudomonas syringae pv. phaseolicola (strain 1448A / Race 6)), this protein is Glutamate--cysteine ligase.